The following is a 1297-amino-acid chain: Phosphoribosylformylglycinamidine synthase (1297 aa).

ATP contacts are provided by residues 307–318 (GASTGSGGEIRD) and alanine 678. 3 residues coordinate Mg(2+): glutamate 718, asparagine 722, and aspartate 886. The 254-residue stretch at 1044–1297 (MAILREQGVN…MFQNARKNLG (254 aa)) folds into the Glutamine amidotransferase type-1 domain. Cysteine 1137 serves as the catalytic Nucleophile. Residues histidine 1262 and glutamate 1264 contribute to the active site.

It in the N-terminal section; belongs to the FGAMS family. In terms of assembly, monomer.

The protein resides in the cytoplasm. The catalysed reaction is N(2)-formyl-N(1)-(5-phospho-beta-D-ribosyl)glycinamide + L-glutamine + ATP + H2O = 2-formamido-N(1)-(5-O-phospho-beta-D-ribosyl)acetamidine + L-glutamate + ADP + phosphate + H(+). It participates in purine metabolism; IMP biosynthesis via de novo pathway; 5-amino-1-(5-phospho-D-ribosyl)imidazole from N(2)-formyl-N(1)-(5-phospho-D-ribosyl)glycinamide: step 1/2. Its function is as follows. Phosphoribosylformylglycinamidine synthase involved in the purines biosynthetic pathway. Catalyzes the ATP-dependent conversion of formylglycinamide ribonucleotide (FGAR) and glutamine to yield formylglycinamidine ribonucleotide (FGAM) and glutamate. The protein is Phosphoribosylformylglycinamidine synthase of Vibrio vulnificus (strain CMCP6).